We begin with the raw amino-acid sequence, 120 residues long: Large ribosomal subunit protein eL18 (120 aa).

Belongs to the eukaryotic ribosomal protein eL18 family.

In Pyrococcus horikoshii (strain ATCC 700860 / DSM 12428 / JCM 9974 / NBRC 100139 / OT-3), this protein is Large ribosomal subunit protein eL18.